A 396-amino-acid chain; its full sequence is Probable sugar efflux transporter (396 aa).

A run of 12 helical transmembrane segments spans residues Val-15–Met-35, Gly-51–Ala-71, Leu-84–Leu-104, Met-109–Ile-129, Gln-137–Gly-157, Val-168–Leu-188, Pro-209–Tyr-229, Asn-245–Phe-265, Pro-273–Phe-293, Thr-297–Leu-317, Val-333–Gly-353, and Ile-365–Leu-385.

It belongs to the major facilitator superfamily. SotB (TC 2.A.1.2) family.

It is found in the cell inner membrane. Involved in the efflux of sugars. The physiological role may be the reduction of the intracellular concentration of toxic sugars or sugar metabolites. This is Probable sugar efflux transporter from Haemophilus influenzae (strain ATCC 51907 / DSM 11121 / KW20 / Rd).